The primary structure comprises 359 residues: Ornithine cyclodeaminase (359 aa).

L-ornithine contacts are provided by Arg53 and Lys77. NAD(+) contacts are provided by residues Thr92, Arg120, 147-148, Asp169, Thr209, 232-235, Lys239, and Ser300; these read AQ and VGGD. L-ornithine is bound at residue Arg120. Asp235 provides a ligand contact to L-ornithine. Catalysis depends on Asp235, which acts as the Proton donor/acceptor. Val301 contacts L-ornithine.

The protein belongs to the ornithine cyclodeaminase/mu-crystallin family. Requires NAD(+) as cofactor.

The enzyme catalyses L-ornithine = L-proline + NH4(+). It participates in amino-acid biosynthesis; L-proline biosynthesis; L-proline from L-ornithine: step 1/1. Its function is as follows. Catalyzes the conversion of L-ornithine into L-proline with release of ammonia. The sequence is that of Ornithine cyclodeaminase from Brucella melitensis biotype 1 (strain ATCC 23456 / CCUG 17765 / NCTC 10094 / 16M).